A 223-amino-acid polypeptide reads, in one-letter code: 7-cyano-7-deazaguanine synthase (223 aa).

12 to 22 lines the ATP pocket; sequence FSGGQDSTTCL. Zn(2+) contacts are provided by cysteine 189, cysteine 198, cysteine 201, and cysteine 204.

It belongs to the QueC family. In terms of assembly, homodimer. It depends on Zn(2+) as a cofactor.

The enzyme catalyses 7-carboxy-7-deazaguanine + NH4(+) + ATP = 7-cyano-7-deazaguanine + ADP + phosphate + H2O + H(+). Its pathway is purine metabolism; 7-cyano-7-deazaguanine biosynthesis. Catalyzes the ATP-dependent conversion of 7-carboxy-7-deazaguanine (CDG) to 7-cyano-7-deazaguanine (preQ(0)). The protein is 7-cyano-7-deazaguanine synthase of Halalkalibacterium halodurans (strain ATCC BAA-125 / DSM 18197 / FERM 7344 / JCM 9153 / C-125) (Bacillus halodurans).